The following is a 41-amino-acid chain: Histone H3.2 (41 aa).

Positions 1–41 (MARAKQTARKSTGAEAPRKQLASKAARKSAPATGGIKKPHR) are disordered.

The protein belongs to the histone H3 family. In terms of assembly, the nucleosome is a histone octamer containing two molecules each of H2A, H2B, H3 and H4 assembled in one H3-H4 heterotetramer and two H2A-H2B heterodimers. The octamer wraps approximately 147 bp of DNA.

The protein localises to the nucleus. It is found in the chromosome. In terms of biological role, core component of nucleosome. Nucleosomes wrap and compact DNA into chromatin, limiting DNA accessibility to the cellular machineries which require DNA as a template. Histones thereby play a central role in transcription regulation, DNA repair, DNA replication and chromosomal stability. DNA accessibility is regulated via a complex set of post-translational modifications of histones, also called histone code, and nucleosome remodeling. The sequence is that of Histone H3.2 from Tetrahymena borealis.